The following is a 305-amino-acid chain: UDP-3-O-acyl-N-acetylglucosamine deacetylase (305 aa).

Residues histidine 79, histidine 238, and aspartate 242 each coordinate Zn(2+). Histidine 265 acts as the Proton donor in catalysis.

It belongs to the LpxC family. The cofactor is Zn(2+).

It carries out the reaction a UDP-3-O-[(3R)-3-hydroxyacyl]-N-acetyl-alpha-D-glucosamine + H2O = a UDP-3-O-[(3R)-3-hydroxyacyl]-alpha-D-glucosamine + acetate. The protein operates within glycolipid biosynthesis; lipid IV(A) biosynthesis; lipid IV(A) from (3R)-3-hydroxytetradecanoyl-[acyl-carrier-protein] and UDP-N-acetyl-alpha-D-glucosamine: step 2/6. Catalyzes the hydrolysis of UDP-3-O-myristoyl-N-acetylglucosamine to form UDP-3-O-myristoylglucosamine and acetate, the committed step in lipid A biosynthesis. This is UDP-3-O-acyl-N-acetylglucosamine deacetylase from Enterobacter sp. (strain 638).